A 456-amino-acid chain; its full sequence is Alcohol acyltransferase 17 (456 aa).

Catalysis depends on proton acceptor residues His166 and Asp382.

Belongs to the plant acyltransferase family. Expressed in fruit.

In terms of biological role, involved in the biosynthesis of volatile esters which confer kiwifruit flavor. Alcohol acyl transferase that can use a wide range of alcohols as substrate to produce esters. The sequence is that of Alcohol acyltransferase 17 from Actinidia deliciosa (Kiwi).